Reading from the N-terminus, the 758-residue chain is MDNTTNINTNERSSNTDFSSAPNIKGLNSHTQLQFDADSRVFVSDVMAKNSKQLLYAHIYNYLIKNNYWNSAAKFLSEADLPLSRINGSASGGKTSLNASLKQGLMDIASKGDIVSEDGLLPSKMLMDANDTFLLEWWEIFQSLFNGDLESGYQQDHNPLRERIIPILPANSKSNMPSHFSNLPPNVIPPTQNSFPVSEESFRPNGDGSNFNLNDPTNRNVSERFLSRTSGVYDKQNSANFAPDTAINSDIAGQQYATINLHKHFNDLQSPAQPQQSSQQQIQQPQHQPQHQPQQQQQQQQQQQQQQQQQQQQQQQQQQQQQQHQQQQQTPYPIVNPQMVPHIPSENSHSTGLMPSVPPTNQQFNAQTQSSMFSDQQRFFQYQLHHQNQGQAPSFQQSQSGRFDDMNAMKMFFQQQALQQNSLQQNLGNQNYQSNTRNNTAEETTPTNDNNANGNSLLQEHIRARFNKMKTIPQQMKNQSTVANPVVSDITSQQQYMHMMMQRMAANQQLQNSAFPPDTNRIAPANNTMPLQPGNMGSPVIENPGMRQTNPSGQNPMINMQPLYQNVSSAMHAFAPQQQFHLPQHYKTNTSVPQNDSTSVFPLPNNNNNNNNNNNNNNNNNSNNSNNNNNNNNNNNNSNNTPTVSQPSSKCTSSSSTTPNITTTIQPKRKQRVGKTKTKESRKVAAAQKVMKSKKLEQNGDSAATNFINVTPKDSGGKGTVKVQNSNSQQQLNGSFSMDTETFDIFNIGDFSPDLMDS.

Residues 1 to 23 (MDNTTNINTNERSSNTDFSSAPN) are disordered. Residues 51 to 83 (SKQLLYAHIYNYLIKNNYWNSAAKFLSEADLPL) enclose the LisH domain. Disordered regions lie at residues 191–220 (TQNS…TNRN), 268–299 (LQSP…QQQQ), 322–355 (QQHQ…GLMP), 428–454 (GNQN…NANG), and 587–681 (KTNT…TKES). Residues 207–220 (DGSNFNLNDPTNRN) are compositionally biased toward polar residues. A compositionally biased stretch (low complexity) spans 269 to 299 (QSPAQPQQSSQQQIQQPQHQPQHQPQQQQQQ). Polar residues-rich tracts occupy residues 345-355 (SENSHSTGLMP), 436-454 (TRNN…NANG), and 587-600 (KTNT…STSV). Residues 605-664 (NNNNNNNNNNNNNNNNNSNNSNNNNNNNNNNNNSNNTPTVSQPSSKCTSSSSTTPNITTT) show a composition bias toward low complexity. The span at 667–676 (PKRKQRVGKT) shows a compositional bias: basic residues.

This sequence belongs to the MSS11 family. Interacts with FLO8, STE12 and TEC1.

It localises to the cytoplasm. It is found in the nucleus. Transcription factor that regulates pseudohyphal differentiation, invasive growth, floculation, adhesion and starch metabolism in response to nutrient availability. The polypeptide is Transcription activator MSS11 (MSS11) (Saccharomyces cerevisiae (strain ATCC 204508 / S288c) (Baker's yeast)).